Reading from the N-terminus, the 941-residue chain is Isoleucine--tRNA ligase (941 aa).

The 'HIGH' region motif lies at 58-68; it reads PYANGNIHLGH. Position 564 (glutamate 564) interacts with L-isoleucyl-5'-AMP. The 'KMSKS' region signature appears at 605–609; the sequence is KMSKS. An ATP-binding site is contributed by lysine 608. Zn(2+) is bound by residues cysteine 904, cysteine 907, cysteine 924, and cysteine 927.

This sequence belongs to the class-I aminoacyl-tRNA synthetase family. IleS type 1 subfamily. As to quaternary structure, monomer. Zn(2+) serves as cofactor.

The protein localises to the cytoplasm. It carries out the reaction tRNA(Ile) + L-isoleucine + ATP = L-isoleucyl-tRNA(Ile) + AMP + diphosphate. Its function is as follows. Catalyzes the attachment of isoleucine to tRNA(Ile). As IleRS can inadvertently accommodate and process structurally similar amino acids such as valine, to avoid such errors it has two additional distinct tRNA(Ile)-dependent editing activities. One activity is designated as 'pretransfer' editing and involves the hydrolysis of activated Val-AMP. The other activity is designated 'posttransfer' editing and involves deacylation of mischarged Val-tRNA(Ile). In Hahella chejuensis (strain KCTC 2396), this protein is Isoleucine--tRNA ligase.